A 245-amino-acid polypeptide reads, in one-letter code: Ribosomal RNA large subunit methyltransferase E (245 aa).

Residues Gly-58, Trp-60, Asp-78, Asp-96, and Asp-123 each coordinate S-adenosyl-L-methionine. Residue Lys-163 is the Proton acceptor of the active site.

Belongs to the class I-like SAM-binding methyltransferase superfamily. RNA methyltransferase RlmE family.

Its subcellular location is the cytoplasm. It catalyses the reaction uridine(2552) in 23S rRNA + S-adenosyl-L-methionine = 2'-O-methyluridine(2552) in 23S rRNA + S-adenosyl-L-homocysteine + H(+). Specifically methylates the uridine in position 2552 of 23S rRNA at the 2'-O position of the ribose in the fully assembled 50S ribosomal subunit. The chain is Ribosomal RNA large subunit methyltransferase E from Methanocaldococcus jannaschii (strain ATCC 43067 / DSM 2661 / JAL-1 / JCM 10045 / NBRC 100440) (Methanococcus jannaschii).